The sequence spans 160 residues: Serine-protein kinase RsbW (160 aa).

The protein belongs to the anti-sigma-factor family.

The catalysed reaction is L-seryl-[protein] + ATP = O-phospho-L-seryl-[protein] + ADP + H(+). The enzyme catalyses L-threonyl-[protein] + ATP = O-phospho-L-threonyl-[protein] + ADP + H(+). Negative regulator of sigma-B activity. Phosphorylates and inactivates its specific antagonist protein, RsbV. Upon phosphorylation of RsbV, RsbW is released and binds to sigma-B, thereby blocking its ability to form an RNA polymerase holoenzyme (E-sigma-B). This Bacillus licheniformis protein is Serine-protein kinase RsbW.